Reading from the N-terminus, the 390-residue chain is Serpin B3 (390 aa).

Methionine 1 is subject to N-acetylmethionine.

The protein belongs to the serpin family. Ov-serpin subfamily. In terms of assembly, interacts with MAPK8/JNK1. As to expression, squamous cells. Expressed in some hepatocellular carcinoma (at protein level).

The protein resides in the cytoplasm. Functionally, may act as a papain-like cysteine protease inhibitor to modulate the host immune response against tumor cells. Also functions as an inhibitor of UV-induced apoptosis via suppression of the activity of c-Jun NH(2)-terminal kinase (JNK1). The polypeptide is Serpin B3 (SERPINB3) (Homo sapiens (Human)).